The primary structure comprises 447 residues: GTPase Der (447 aa).

2 EngA-type G domains span residues 3-167 and 181-354; these read PVVA…NLPD and IKLA…KSAT. GTP contacts are provided by residues 9–16, 56–60, 119–122, 187–194, 234–238, and 299–302; these read GRPNVGKS, DTGGF, NKAE, DTAGL, and NKWD. Residues 355–439 form the KH-like domain; that stretch reads RKMSTPVLTR…PLRIQFKSSQ (85 aa).

This sequence belongs to the TRAFAC class TrmE-Era-EngA-EngB-Septin-like GTPase superfamily. EngA (Der) GTPase family. Associates with the 50S ribosomal subunit.

GTPase that plays an essential role in the late steps of ribosome biogenesis. This Variovorax paradoxus (strain S110) protein is GTPase Der.